The chain runs to 230 residues: MADEKNKPENPDLDQRDINNPRDREALKQAADDFLKARRAEARAEAAADEAEGEVDETANRIAVLEADNTELKDQMLRVAAEMENLRKRTQRDVQDARAYAITNFARDMLSVSDNLRRALDAIPADALEADSNLKSLSEGVEMTERAMLLALERHGVKKLEPEGQKFDPNFHQAMFEVPNPDLPNNTVVQVVQAGYAIGDRVLRPAMVGVSKGGPKVSAENGASTSEDNA.

Disordered regions lie at residues 1-26 (MADE…DREA) and 209-230 (GVSK…EDNA). Positions 221-230 (NGASTSEDNA) are enriched in polar residues.

The protein belongs to the GrpE family. In terms of assembly, homodimer.

Its subcellular location is the cytoplasm. Participates actively in the response to hyperosmotic and heat shock by preventing the aggregation of stress-denatured proteins, in association with DnaK and GrpE. It is the nucleotide exchange factor for DnaK and may function as a thermosensor. Unfolded proteins bind initially to DnaJ; upon interaction with the DnaJ-bound protein, DnaK hydrolyzes its bound ATP, resulting in the formation of a stable complex. GrpE releases ADP from DnaK; ATP binding to DnaK triggers the release of the substrate protein, thus completing the reaction cycle. Several rounds of ATP-dependent interactions between DnaJ, DnaK and GrpE are required for fully efficient folding. The protein is Protein GrpE of Brucella suis biovar 1 (strain 1330).